A 333-amino-acid chain; its full sequence is Homeobox protein HMX1 (333 aa).

Disordered stretches follow at residues 1 to 74 (MAQD…STSA), 86 to 109 (GTEG…APRC), and 139 to 204 (CASP…KKKT). Positions 17 to 30 (DYTQGNTDRSTAAA) are enriched in polar residues. Over residues 87–105 (TEGGGGTRRAAAGGGGGRG) the composition is skewed to gly residues. A compositionally biased stretch (basic and acidic residues) spans 144 to 158 (TSDRDSPELPEDTER). The segment covering 159 to 176 (AGGGGRAAARGPAGGRQS) has biased composition (gly residues). Residues 181 to 192 (EEEEERGEEAGE) are compositionally biased toward acidic residues. The segment at residues 201–260 (KKKTRTVFSRSQVFQLESTFDVKRYLSSSERAGLAASLHLTETQVKIWFQNRRNKWKRQL) is a DNA-binding region (homeobox). Residues 261–271 (AADLEAANLSH) carry the HMX family specific domain 1 motif.

This sequence belongs to the HMX homeobox family.

It localises to the nucleus. DNA-binding protein that binds to the 5'-CAAG-3' core sequence. May function as a transcriptional repressor. Seems to act as a transcriptional antagonist of NKX2-5. May play an important role in the development of craniofacial structures such as the eye and ear. This is Homeobox protein HMX1 (HMX1) from Gallus gallus (Chicken).